Here is a 325-residue protein sequence, read N- to C-terminus: Heat-inducible transcription repressor HrcA (325 aa).

Belongs to the HrcA family.

Functionally, negative regulator of class I heat shock genes (grpE-dnaK-dnaJ and groELS operons). Prevents heat-shock induction of these operons. The chain is Heat-inducible transcription repressor HrcA from Staphylococcus epidermidis (strain ATCC 35984 / DSM 28319 / BCRC 17069 / CCUG 31568 / BM 3577 / RP62A).